Here is a 138-residue protein sequence, read N- to C-terminus: ATP synthase epsilon chain (138 aa).

Belongs to the ATPase epsilon chain family. As to quaternary structure, F-type ATPases have 2 components, CF(1) - the catalytic core - and CF(0) - the membrane proton channel. CF(1) has five subunits: alpha(3), beta(3), gamma(1), delta(1), epsilon(1). CF(0) has three main subunits: a, b and c.

It localises to the cell inner membrane. In terms of biological role, produces ATP from ADP in the presence of a proton gradient across the membrane. This chain is ATP synthase epsilon chain, found in Wigglesworthia glossinidia brevipalpis.